The chain runs to 467 residues: Cytochrome c-552 (467 aa).

Residues 1–27 form the signal peptide; the sequence is MVKKLTGKSFALSALVAASFVAAGAMA. Residue histidine 87 coordinates heme c. Residues cysteine 115, cysteine 118, and lysine 119 each contribute to the heme site. Residues cysteine 153, cysteine 156, histidine 157, cysteine 195, cysteine 198, and histidine 199 each contribute to the heme c site. Ca(2+) is bound by residues glutamate 201, tyrosine 202, lysine 250, and glutamine 252. Substrate is bound at residue tyrosine 202. Histidine 253 provides a ligand contact to substrate. Residues histidine 264, cysteine 271, cysteine 274, histidine 275, histidine 290, cysteine 303, cysteine 306, histidine 307, and histidine 382 each contribute to the heme c site.

The protein belongs to the cytochrome c-552 family. It depends on Ca(2+) as a cofactor. Requires heme c as cofactor.

It localises to the periplasm. It catalyses the reaction 6 Fe(III)-[cytochrome c] + NH4(+) + 2 H2O = 6 Fe(II)-[cytochrome c] + nitrite + 8 H(+). Its pathway is nitrogen metabolism; nitrate reduction (assimilation). Functionally, catalyzes the reduction of nitrite to ammonia, consuming six electrons in the process. The protein is Cytochrome c-552 of Shewanella amazonensis (strain ATCC BAA-1098 / SB2B).